We begin with the raw amino-acid sequence, 172 residues long: Protein CapG (172 aa).

Belongs to the transferase hexapeptide repeat family.

The protein operates within capsule biogenesis; capsule polysaccharide biosynthesis. Functionally, required for the biosynthesis of type 1 capsular polysaccharide. In Staphylococcus aureus, this protein is Protein CapG (capG).